A 179-amino-acid polypeptide reads, in one-letter code: Putative 5'(3')-deoxyribonucleotidase (179 aa).

Catalysis depends on Asp-9, which acts as the Nucleophile. Mg(2+) is bound by residues Asp-9, Asp-11, and Asp-135. The active-site Proton donor is Asp-11.

Belongs to the 5'(3')-deoxyribonucleotidase family. Mg(2+) serves as cofactor.

Its function is as follows. Dephosphorylates the 5' and 2'(3')-phosphates of deoxyribonucleotides. The sequence is that of Putative 5'(3')-deoxyribonucleotidase from Staphylococcus epidermidis (strain ATCC 35984 / DSM 28319 / BCRC 17069 / CCUG 31568 / BM 3577 / RP62A).